A 97-amino-acid chain; its full sequence is MIPGGLTEARPATAEVQEIADRVKAQLEEETNEKYEIFKAVEYKTQVVAGVNYFIKMDVGGGCFTHIKVFKDLSGKNNLELTGYQTNKTEDDELTYF.

Met-1 bears the N-acetylmethionine mark. Residues 46 to 50 (QVVAG) carry the Secondary area of contact motif.

The protein belongs to the cystatin family.

Its subcellular location is the cytoplasm. Functionally, this is an intracellular thiol proteinase inhibitor. The chain is Cystatin-A (Csta) from Mus musculus (Mouse).